Consider the following 251-residue polypeptide: 4-hydroxy-tetrahydrodipicolinate reductase (251 aa).

An NAD(+)-binding site is contributed by G8–M13. R36 provides a ligand contact to NADP(+). NAD(+) contacts are provided by residues G89–T91 and T113–F116. Residue H145 is the Proton donor/acceptor of the active site. H146 is a (S)-2,3,4,5-tetrahydrodipicolinate binding site. Residue K149 is the Proton donor of the active site. A (S)-2,3,4,5-tetrahydrodipicolinate-binding site is contributed by G155–T156.

Belongs to the DapB family.

The protein resides in the cytoplasm. It catalyses the reaction (S)-2,3,4,5-tetrahydrodipicolinate + NAD(+) + H2O = (2S,4S)-4-hydroxy-2,3,4,5-tetrahydrodipicolinate + NADH + H(+). The catalysed reaction is (S)-2,3,4,5-tetrahydrodipicolinate + NADP(+) + H2O = (2S,4S)-4-hydroxy-2,3,4,5-tetrahydrodipicolinate + NADPH + H(+). It functions in the pathway amino-acid biosynthesis; L-lysine biosynthesis via DAP pathway; (S)-tetrahydrodipicolinate from L-aspartate: step 4/4. Its function is as follows. Catalyzes the conversion of 4-hydroxy-tetrahydrodipicolinate (HTPA) to tetrahydrodipicolinate. The protein is 4-hydroxy-tetrahydrodipicolinate reductase of Methanocorpusculum labreanum (strain ATCC 43576 / DSM 4855 / Z).